Here is a 215-residue protein sequence, read N- to C-terminus: 3,4-dihydroxy-2-butanone 4-phosphate synthase (215 aa).

D-ribulose 5-phosphate is bound by residues 37 to 38 (RE), D42, 150 to 154 (RPGHT), and E174. Mg(2+) is bound at residue E38. H153 provides a ligand contact to Mg(2+).

This sequence belongs to the DHBP synthase family. As to quaternary structure, homodimer. Mg(2+) serves as cofactor. Requires Mn(2+) as cofactor.

The enzyme catalyses D-ribulose 5-phosphate = (2S)-2-hydroxy-3-oxobutyl phosphate + formate + H(+). It functions in the pathway cofactor biosynthesis; riboflavin biosynthesis; 2-hydroxy-3-oxobutyl phosphate from D-ribulose 5-phosphate: step 1/1. Catalyzes the conversion of D-ribulose 5-phosphate to formate and 3,4-dihydroxy-2-butanone 4-phosphate. In Buchnera aphidicola subsp. Acyrthosiphon pisum (strain 5A), this protein is 3,4-dihydroxy-2-butanone 4-phosphate synthase.